We begin with the raw amino-acid sequence, 464 residues long: Bifunctional protein GlmU (464 aa).

Residues 1–232 form a pyrophosphorylase region; sequence MKHDELAAVI…ADEAMGINDR (232 aa). UDP-N-acetyl-alpha-D-glucosamine contacts are provided by residues 11–14, K25, Q76, and 81–82; these read LAAG and GT. Position 106 (D106) interacts with Mg(2+). Positions 143, 157, 172, and 230 each coordinate UDP-N-acetyl-alpha-D-glucosamine. Residue N230 participates in Mg(2+) binding. The linker stretch occupies residues 233-253; it reads VQLAQASALMRRRINENLMRA. The tract at residues 254-464 is N-acetyltransferase; that stretch reads GVSFIDPEQT…RHDPKCKNKD (211 aa). Residues R336 and K354 each coordinate UDP-N-acetyl-alpha-D-glucosamine. H366 serves as the catalytic Proton acceptor. Y369 and N380 together coordinate UDP-N-acetyl-alpha-D-glucosamine. Acetyl-CoA contacts are provided by residues 389–390, S408, A426, and R443; that span reads NY.

This sequence in the N-terminal section; belongs to the N-acetylglucosamine-1-phosphate uridyltransferase family. It in the C-terminal section; belongs to the transferase hexapeptide repeat family. In terms of assembly, homotrimer. Mg(2+) serves as cofactor.

The protein resides in the cytoplasm. The enzyme catalyses alpha-D-glucosamine 1-phosphate + acetyl-CoA = N-acetyl-alpha-D-glucosamine 1-phosphate + CoA + H(+). It carries out the reaction N-acetyl-alpha-D-glucosamine 1-phosphate + UTP + H(+) = UDP-N-acetyl-alpha-D-glucosamine + diphosphate. It participates in nucleotide-sugar biosynthesis; UDP-N-acetyl-alpha-D-glucosamine biosynthesis; N-acetyl-alpha-D-glucosamine 1-phosphate from alpha-D-glucosamine 6-phosphate (route II): step 2/2. Its pathway is nucleotide-sugar biosynthesis; UDP-N-acetyl-alpha-D-glucosamine biosynthesis; UDP-N-acetyl-alpha-D-glucosamine from N-acetyl-alpha-D-glucosamine 1-phosphate: step 1/1. It functions in the pathway bacterial outer membrane biogenesis; LPS lipid A biosynthesis. In terms of biological role, catalyzes the last two sequential reactions in the de novo biosynthetic pathway for UDP-N-acetylglucosamine (UDP-GlcNAc). The C-terminal domain catalyzes the transfer of acetyl group from acetyl coenzyme A to glucosamine-1-phosphate (GlcN-1-P) to produce N-acetylglucosamine-1-phosphate (GlcNAc-1-P), which is converted into UDP-GlcNAc by the transfer of uridine 5-monophosphate (from uridine 5-triphosphate), a reaction catalyzed by the N-terminal domain. The sequence is that of Bifunctional protein GlmU from Syntrophotalea carbinolica (strain DSM 2380 / NBRC 103641 / GraBd1) (Pelobacter carbinolicus).